Here is a 490-residue protein sequence, read N- to C-terminus: Glutamate--tRNA ligase (490 aa).

A 'HIGH' region motif is present at residues 12 to 22 (PSPTGTPHVGL). Positions 256–260 (KLSKR) match the 'KMSKS' region motif. Lys259 contributes to the ATP binding site.

Belongs to the class-I aminoacyl-tRNA synthetase family. Glutamate--tRNA ligase type 1 subfamily. In terms of assembly, monomer.

It localises to the cytoplasm. The catalysed reaction is tRNA(Glu) + L-glutamate + ATP = L-glutamyl-tRNA(Glu) + AMP + diphosphate. Functionally, catalyzes the attachment of glutamate to tRNA(Glu) in a two-step reaction: glutamate is first activated by ATP to form Glu-AMP and then transferred to the acceptor end of tRNA(Glu). The sequence is that of Glutamate--tRNA ligase from Mycobacterium sp. (strain KMS).